Here is a 122-residue protein sequence, read N- to C-terminus: Ribosome-binding factor A (122 aa).

This sequence belongs to the RbfA family. Monomer. Binds 30S ribosomal subunits, but not 50S ribosomal subunits or 70S ribosomes.

Its subcellular location is the cytoplasm. One of several proteins that assist in the late maturation steps of the functional core of the 30S ribosomal subunit. Associates with free 30S ribosomal subunits (but not with 30S subunits that are part of 70S ribosomes or polysomes). Required for efficient processing of 16S rRNA. May interact with the 5'-terminal helix region of 16S rRNA. The protein is Ribosome-binding factor A of Polaromonas sp. (strain JS666 / ATCC BAA-500).